The sequence spans 345 residues: S-adenosylmethionine:tRNA ribosyltransferase-isomerase (345 aa).

It belongs to the QueA family. In terms of assembly, monomer.

It localises to the cytoplasm. It catalyses the reaction 7-aminomethyl-7-carbaguanosine(34) in tRNA + S-adenosyl-L-methionine = epoxyqueuosine(34) in tRNA + adenine + L-methionine + 2 H(+). Its pathway is tRNA modification; tRNA-queuosine biosynthesis. Transfers and isomerizes the ribose moiety from AdoMet to the 7-aminomethyl group of 7-deazaguanine (preQ1-tRNA) to give epoxyqueuosine (oQ-tRNA). The sequence is that of S-adenosylmethionine:tRNA ribosyltransferase-isomerase from Helicobacter pylori (strain Shi470).